Reading from the N-terminus, the 175-residue chain is UPF0398 protein SPD_0338 (175 aa).

This sequence belongs to the UPF0398 family.

This Streptococcus pneumoniae serotype 2 (strain D39 / NCTC 7466) protein is UPF0398 protein SPD_0338.